Here is a 124-residue protein sequence, read N- to C-terminus: Small ribosomal subunit protein uS13 (124 aa).

Residues 95–124 are disordered; the sequence is GLPVRGQRTKTNARTRKGPKRTVAGKKKAR.

The protein belongs to the universal ribosomal protein uS13 family. In terms of assembly, part of the 30S ribosomal subunit. Forms a loose heterodimer with protein S19. Forms two bridges to the 50S subunit in the 70S ribosome.

In terms of biological role, located at the top of the head of the 30S subunit, it contacts several helices of the 16S rRNA. In the 70S ribosome it contacts the 23S rRNA (bridge B1a) and protein L5 of the 50S subunit (bridge B1b), connecting the 2 subunits; these bridges are implicated in subunit movement. Contacts the tRNAs in the A and P-sites. This Leifsonia xyli subsp. xyli (strain CTCB07) protein is Small ribosomal subunit protein uS13.